Consider the following 435-residue polypeptide: Adenylosuccinate synthetase (435 aa).

Residues 17-23 (GDEGKGK) and 45-47 (GHT) contribute to the GTP site. The Proton acceptor role is filled by D18. 2 residues coordinate Mg(2+): D18 and G45. Residues 18 to 21 (DEGK), 43 to 46 (NAGH), T134, R148, Q229, T244, and R308 contribute to the IMP site. Residue H46 is the Proton donor of the active site. 304 to 310 (SVTGRPR) is a substrate binding site. Residues R310, 336–338 (KLD), and 418–420 (STG) contribute to the GTP site.

Belongs to the adenylosuccinate synthetase family. As to quaternary structure, homodimer. Mg(2+) serves as cofactor.

It is found in the cytoplasm. It catalyses the reaction IMP + L-aspartate + GTP = N(6)-(1,2-dicarboxyethyl)-AMP + GDP + phosphate + 2 H(+). The protein operates within purine metabolism; AMP biosynthesis via de novo pathway; AMP from IMP: step 1/2. In terms of biological role, plays an important role in the de novo pathway of purine nucleotide biosynthesis. Catalyzes the first committed step in the biosynthesis of AMP from IMP. The protein is Adenylosuccinate synthetase of Bordetella pertussis (strain Tohama I / ATCC BAA-589 / NCTC 13251).